The chain runs to 550 residues: Hydroxylamine reductase (550 aa).

C3, C6, C18, and C25 together coordinate [2Fe-2S] cluster. 8 residues coordinate hybrid [4Fe-2O-2S] cluster: H249, E273, C317, C405, C433, C458, E492, and K494. C405 is subject to Cysteine persulfide.

Belongs to the HCP family. The cofactor is [2Fe-2S] cluster. It depends on hybrid [4Fe-2O-2S] cluster as a cofactor.

The protein resides in the cytoplasm. It catalyses the reaction A + NH4(+) + H2O = hydroxylamine + AH2 + H(+). In terms of biological role, catalyzes the reduction of hydroxylamine to form NH(3) and H(2)O. This is Hydroxylamine reductase from Proteus mirabilis (strain HI4320).